The following is an 846-amino-acid chain: Enhancer of polycomb-like protein 1 (846 aa).

5 disordered regions span residues 169–204, 391–466, 587–607, 682–702, and 759–804; these read FNSKAEGSSGDVKSDKEQGRGMRVKGKDREKEKGDA, TSDE…APDA, EKKRPRSIDEVEEEMQEQSPK, AADAKPPPAPIFQKPPAPQPN, and QVQA…GVKQ. Residues 180 to 203 are compositionally biased toward basic and acidic residues; that stretch reads VKSDKEQGRGMRVKGKDREKEKGD. A compositionally biased stretch (polar residues) spans 411–426; sequence PSLSGQTPLTSGQSSS. Residues 432–452 are compositionally biased toward basic and acidic residues; the sequence is TDKDREERAQRERYDAQRNAE. Positions 434-490 form a coiled coil; sequence KDREERAQRERYDAQRNAERSGILSGRSNAPDALKERLQALQQKTEEMLARKKEQDA. The segment covering 686–702 has biased composition (pro residues); that stretch reads KPPPAPIFQKPPAPQPN. Residues 759 to 773 are compositionally biased toward low complexity; the sequence is QVQAQGQGHPQAHLQ. The segment covering 783–796 has biased composition (polar residues); the sequence is NGVNSPMPNGQQML.

Belongs to the enhancer of polycomb family. As to quaternary structure, component of the NuA4 histone acetyltransferase complex.

It is found in the nucleus. In terms of biological role, component of the NuA4 histone acetyltransferase complex which is involved in transcriptional activation of selected genes principally by acetylation of nucleosomal histone H4 and H2A. The NuA4 complex is also involved in DNA repair. Involved in gene silencing by neighboring heterochromatin, blockage of the silencing spreading along the chromosome, and required for cell cycle progression through G2/M. The chain is Enhancer of polycomb-like protein 1 (EPL1) from Cryptococcus neoformans var. neoformans serotype D (strain JEC21 / ATCC MYA-565) (Filobasidiella neoformans).